Reading from the N-terminus, the 206-residue chain is Adenylyl-sulfate kinase (206 aa).

31-38 (GLSASGKS) lines the ATP pocket. Ser105 acts as the Phosphoserine intermediate in catalysis.

The protein belongs to the APS kinase family.

It catalyses the reaction adenosine 5'-phosphosulfate + ATP = 3'-phosphoadenylyl sulfate + ADP + H(+). The protein operates within sulfur metabolism; hydrogen sulfide biosynthesis; sulfite from sulfate: step 2/3. In terms of biological role, catalyzes the synthesis of activated sulfate. This is Adenylyl-sulfate kinase (sD) from Emericella nidulans (strain FGSC A4 / ATCC 38163 / CBS 112.46 / NRRL 194 / M139) (Aspergillus nidulans).